A 145-amino-acid polypeptide reads, in one-letter code: Succinate dehydrogenase assembly factor 2, mitochondrial (145 aa).

This sequence belongs to the SDHAF2 family. In terms of assembly, interacts with the flavoprotein subunit within the SDH catalytic dimer.

Its subcellular location is the mitochondrion matrix. Functionally, plays an essential role in the assembly of succinate dehydrogenase (SDH), an enzyme complex (also referred to as respiratory complex II) that is a component of both the tricarboxylic acid (TCA) cycle and the mitochondrial electron transport chain, and which couples the oxidation of succinate to fumarate with the reduction of ubiquinone (coenzyme Q) to ubiquinol. Required for flavinylation (covalent attachment of FAD) of the flavoprotein subunit of the SDH catalytic dimer. This is Succinate dehydrogenase assembly factor 2, mitochondrial from Yarrowia lipolytica (strain CLIB 122 / E 150) (Yeast).